The sequence spans 75 residues: Supwaprin-a (75 aa).

An N-terminal signal peptide occupies residues 1 to 24 (MSSGGLLLLLGFLTLWAELTPVSG). Residues 27 to 72 (RPKKPGLCPPRPQKPPCVRECKNDWSCPGEQKCCRYGCIFECRDPI) form the WAP domain. 4 disulfides stabilise this stretch: C34–C60, C43–C64, C47–C59, and C53–C68.

It belongs to the venom waprin family. Expressed by the venom gland.

It localises to the secreted. Functionally, damages membranes of susceptible bacteria. Has no hemolytic activity. Not toxic to mice. Does not inhibit the proteinases elastase and cathepsin G. This is Supwaprin-a from Austrelaps superbus (Lowland copperhead snake).